Reading from the N-terminus, the 248-residue chain is MKLIINADDFGFTRAINYGIIDAHNLGVLTSTTLMVTMPAFEHAVDLSKKTPTLGIGLHLNLTLGKPLTNGATLVNEDGELIKPKFTTPEYPYNEEEVYQEFKAQYHRFTEFMKKKPSHLDSHLFSTDIYPVVTSAAKRLAEEIGIPLRNHDTKGFEHVEFMWEKPLEIPYGEYDNLDYIYDNAASILCYDYVEIMTHPGYLDTFILENSTFSTPRANELESLISPRMRQFLNENNVELISYHDIPKK.

Residues His59 and His123 each contribute to the Mg(2+) site.

This sequence belongs to the YdjC deacetylase family. In terms of assembly, homodimer. It depends on Mg(2+) as a cofactor.

Its function is as follows. Probably catalyzes the deacetylation of acetylated carbohydrates an important step in the degradation of oligosaccharides. The sequence is that of Carbohydrate deacetylase 2 from Listeria innocua serovar 6a (strain ATCC BAA-680 / CLIP 11262).